Consider the following 91-residue polypeptide: UPF0386 protein Caul_4643 (91 aa).

This sequence belongs to the UPF0386 family.

In Caulobacter sp. (strain K31), this protein is UPF0386 protein Caul_4643.